Here is a 60-residue protein sequence, read N- to C-terminus: Large ribosomal subunit protein uL30 (60 aa).

It belongs to the universal ribosomal protein uL30 family. As to quaternary structure, part of the 50S ribosomal subunit.

The chain is Large ribosomal subunit protein uL30 from Bacillus anthracis (strain A0248).